We begin with the raw amino-acid sequence, 149 residues long: SsrA-binding protein (149 aa).

This sequence belongs to the SmpB family.

Its subcellular location is the cytoplasm. In terms of biological role, required for rescue of stalled ribosomes mediated by trans-translation. Binds to transfer-messenger RNA (tmRNA), required for stable association of tmRNA with ribosomes. tmRNA and SmpB together mimic tRNA shape, replacing the anticodon stem-loop with SmpB. tmRNA is encoded by the ssrA gene; the 2 termini fold to resemble tRNA(Ala) and it encodes a 'tag peptide', a short internal open reading frame. During trans-translation Ala-aminoacylated tmRNA acts like a tRNA, entering the A-site of stalled ribosomes, displacing the stalled mRNA. The ribosome then switches to translate the ORF on the tmRNA; the nascent peptide is terminated with the 'tag peptide' encoded by the tmRNA and targeted for degradation. The ribosome is freed to recommence translation, which seems to be the essential function of trans-translation. The protein is SsrA-binding protein of Wolbachia pipientis wMel.